A 101-amino-acid polypeptide reads, in one-letter code: MGIRYLLVLVLVLLVLGCEVQGAHMPQQDEATSPSLFTQMQESFYGYWGIAKSAAQGLYEKTYLTTVDEKIREIYNKSTAAVSTYAGIFTDQLLSMLKGDQ.

Positions 1–22 are cleaved as a signal peptide; the sequence is MGIRYLLVLVLVLLVLGCEVQG. Residues 66–74 form a lipid binding region; the sequence is TVDEKIREI. The interval 78–101 is lipoprotein lipase cofactor; that stretch reads STAAVSTYAGIFTDQLLSMLKGDQ.

The protein belongs to the apolipoprotein C2 family. Post-translationally, proapolipoprotein C-II is synthesized as a sialic acid containing glycoprotein which is subsequently desialylated prior to its proteolytic processing. In terms of processing, proapolipoprotein C-II, the major form found in plasma undergoes proteolytic cleavage of its N-terminal hexapeptide to generate apolipoprotein C-II, which occurs as the minor form in plasma.

The protein localises to the secreted. Component of chylomicrons, very low-density lipoproteins (VLDL), low-density lipoproteins (LDL), and high-density lipoproteins (HDL) in plasma. Plays an important role in lipoprotein metabolism as an activator of lipoprotein lipase. Both proapolipoprotein C-II and apolipoprotein C-II can activate lipoprotein lipase. The protein is Apolipoprotein C-II (APOC2) of Mirounga angustirostris (Northern elephant seal).